We begin with the raw amino-acid sequence, 474 residues long: MTQKLHIKTWGCQMNEYDSAKIADLLLSTHGLELTEEAEQADVLLLNTCSIREKAQEKVFSQLGRWKTWKNEKPGLIIGVGGCVASQEGEHIRERAPFVDIIFGPQTLHRLPEMINQIRGGKSSVVDVSFPEIEKFDCLPEPKAEGPTAFVSIMEGCNKYCTYCVVPYTRGEEVSRPLDDVLFEVAQLADQGVREINLLGQNVNAYRGPTHDGGICTFAELLRLVASIDGIDRLRFTTSHPIEFTDDIIDVYADTPELVSFLHLPVQSGADRILTMMKRGHTALEYKSIIRKLRKVRPDIQISSDFIVGFPGETNEEFEQTMNLIADVNFDMSFSFVYSARPGTPAADMPDDVSEEEKKQRLYLLQQRINNQAAKFSRAMLGTEQRVLVEGPSKKDIMELTGRTENNRIVNFKGTPDMIGKFVDIQITDVFTNSLRGDVIRTEDEMGLRVEQSPQSVIRRTRKEDELGVGKYVA.

The MTTase N-terminal domain maps to 3–120 (QKLHIKTWGC…LPEMINQIRG (118 aa)). Cys12, Cys49, Cys83, Cys157, Cys161, and Cys164 together coordinate [4Fe-4S] cluster. Residues 143–375 (KAEGPTAFVS…QQRINNQAAK (233 aa)) enclose the Radical SAM core domain. Residues 378 to 441 (RAMLGTEQRV…TNSLRGDVIR (64 aa)) form the TRAM domain.

Belongs to the methylthiotransferase family. MiaB subfamily. In terms of assembly, monomer. The cofactor is [4Fe-4S] cluster.

The protein localises to the cytoplasm. It carries out the reaction N(6)-dimethylallyladenosine(37) in tRNA + (sulfur carrier)-SH + AH2 + 2 S-adenosyl-L-methionine = 2-methylsulfanyl-N(6)-dimethylallyladenosine(37) in tRNA + (sulfur carrier)-H + 5'-deoxyadenosine + L-methionine + A + S-adenosyl-L-homocysteine + 2 H(+). Its function is as follows. Catalyzes the methylthiolation of N6-(dimethylallyl)adenosine (i(6)A), leading to the formation of 2-methylthio-N6-(dimethylallyl)adenosine (ms(2)i(6)A) at position 37 in tRNAs that read codons beginning with uridine. This is tRNA-2-methylthio-N(6)-dimethylallyladenosine synthase from Actinobacillus succinogenes (strain ATCC 55618 / DSM 22257 / CCUG 43843 / 130Z).